The following is a 518-amino-acid chain: Protein PAC2 (518 aa).

Residues 23–67 (VIKPWPSVKAYGVEWDDHSRGKHSGTIDDIHYFDVQIPNSGSFLK) enclose the CAP-Gly domain. LRR repeat units lie at residues 153 to 174 (NVKDLDLSLNLFTNINSLCEFI), 179 to 201 (NLESLNISQNKLLSGWDNLKEYD), 204 to 227 (HIKTLRLSSCGLSYKHIGKLLKSF), 229 to 252 (TLKMLDLSYNNLTSAGIQNFENEI), 255 to 276 (TLEELNISGNNLISFPLFPKNL), 277 to 298 (TLKGLNVSNNQISRAPSIAIYS), 299 to 319 (VESLDITDNKFKERSLIDDLN), and 324 to 345 (SLKNIHLSGNEFNYNGNYINVE).

Its subcellular location is the cytoplasm. The protein localises to the cytoskeleton. Its function is as follows. Required for viability in the absence of the kinesin-related CIN8 mitotic motor. Seems to be involved in the assembly of alpha-tubulin. The polypeptide is Protein PAC2 (PAC2) (Saccharomyces cerevisiae (strain ATCC 204508 / S288c) (Baker's yeast)).